Here is a 953-residue protein sequence, read N- to C-terminus: Calcium-transporting ATPase type 2C member 1 (953 aa).

The Cytoplasmic portion of the chain corresponds to 1 to 104; the sequence is MDNLLPQSRF…NEFDISEDEP (104 aa). Residues 105–125 form a helical membrane-spanning segment; it reads LWKKYISQFKNPLIMLLLASA. Over 126 to 138 the chain is Lumenal; sequence VISVLMHQFDDAV. Residues 139–157 traverse the membrane as a helical segment; it reads SITVAILIVVTVAFVQEYR. At 158–296 the chain is on the cytoplasmic side; that stretch reads SEKSLEELSK…APKTPLQKSM (139 aa). Residues 297 to 316 form a helical membrane-spanning segment; it reads DLLGKQLSFYSFGIIGIIML. Residues 317–328 lie on the Lumenal side of the membrane; it reads VGWLLGKDILEM. Residues 329-346 traverse the membrane as a helical segment; it reads FTISVSLAVAAIPEGLPI. Ca(2+) contacts are provided by valine 337, alanine 338, isoleucine 340, and glutamate 342. The Cytoplasmic portion of the chain corresponds to 347 to 733; it reads VVTVTLALGV…EEGKGIYNNI (387 aa). Aspartate 384 functions as the 4-aspartylphosphate intermediate in the catalytic mechanism. Mg(2+)-binding residues include aspartate 678 and aspartate 682. A helical membrane pass occupies residues 734-753; it reads KNFVRFQLSTSIAALTLISL. Topologically, residues 754–763 are lumenal; that stretch reads ATLMNFPNPL. The chain crosses the membrane as a helical span at residues 764 to 784; it reads NAMQILWINIIMDGPPAQSLG. Residues asparagine 772 and aspartate 776 each coordinate Ca(2+). The Cytoplasmic segment spans residues 785-804; that stretch reads VEPVDKDVIRKPPRNWKDSI. The helical transmembrane segment at 805–824 threads the bilayer; the sequence is LTKNLILKILVSSIIIVCGT. Topologically, residues 825–842 are lumenal; it reads LFVFWRELRDNVITPRDT. A helical transmembrane segment spans residues 843 to 862; sequence TMTFTCFVFFDMFNALSSRS. The Cytoplasmic segment spans residues 863 to 875; it reads QTKSVFEIGLCSN. The helical transmembrane segment at 876 to 894 threads the bilayer; that stretch reads KMFCYAVLGSIMGQLLVIY. The Lumenal segment spans residues 895-909; that stretch reads FPPLQKVFQTESLSI. Residues 910 to 930 form a helical membrane-spanning segment; it reads LDLLFLLGLTSSVCIVAEIIK. Residues 931-953 are Cytoplasmic-facing; that stretch reads KVERSREKIQKPVSSTSSSFLEV.

This sequence belongs to the cation transport ATPase (P-type) (TC 3.A.3) family. Type IIA subfamily. In terms of assembly, monomer. Homodimer.

It is found in the golgi apparatus. The protein resides in the trans-Golgi network membrane. The protein localises to the golgi stack membrane. The catalysed reaction is Ca(2+)(in) + ATP + H2O = Ca(2+)(out) + ADP + phosphate + H(+). It carries out the reaction Mn(2+)(in) + ATP + H2O = Mn(2+)(out) + ADP + phosphate + H(+). Functionally, ATP-driven pump that supplies the Golgi apparatus with Ca(2+) and Mn(2+) ions, both essential cofactors for processing and trafficking of newly synthesized proteins in the secretory pathway. Within a catalytic cycle, acquires Ca(2+) or Mn(2+) ions on the cytoplasmic side of the membrane and delivers them to the lumenal side. The transfer of ions across the membrane is coupled to ATP hydrolysis and is associated with a transient phosphorylation that shifts the pump conformation from inward-facing to outward-facing state. Plays a primary role in the maintenance of Ca(2+) homeostasis in the trans-Golgi compartment with a functional impact on Golgi and post-Golgi protein sorting as well as a structural impact on cisternae morphology. Responsible for loading the Golgi stores with Ca(2+) ions in keratinocytes, contributing to keratinocyte differentiation and epidermis integrity. Participates in Ca(2+) and Mn(2+) ions uptake into the Golgi store of hippocampal neurons and regulates protein trafficking required for neural polarity. May also play a role in the maintenance of Ca(2+) and Mn(2+) homeostasis and signaling in the cytosol while preventing cytotoxicity. In Bos taurus (Bovine), this protein is Calcium-transporting ATPase type 2C member 1 (ATP2C1).